We begin with the raw amino-acid sequence, 252 residues long: MNIQLICETENPEKFTALCTQYGLVHDPESYLALVQTYDEQGQVRLELRKLDEAKLGAVFVDFVAGAMAHRRKFGGGRGEAVAKAVGIKSGYLPTVIDATAGLGRDAFVLASIGCRVRLVERHPVVRLLLQDGLQRAYADSEIGEMLQQNMQLLPVSHIAQLNPALDCVDVVYLDPMYPHKPKSALVKKEMRVFQHLVGADLDADNLLEPALALANKRVVVKRPDYAPFLAQQSPHFSRETKNHRFDIYLTG.

Residues Arg105–Asp106, Glu121–Arg122, and Asp175 contribute to the S-adenosyl-L-methionine site.

It belongs to the methyltransferase superfamily. RsmJ family.

Its subcellular location is the cytoplasm. It catalyses the reaction guanosine(1516) in 16S rRNA + S-adenosyl-L-methionine = N(2)-methylguanosine(1516) in 16S rRNA + S-adenosyl-L-homocysteine + H(+). Its function is as follows. Specifically methylates the guanosine in position 1516 of 16S rRNA. This chain is Ribosomal RNA small subunit methyltransferase J, found in Pasteurella multocida (strain Pm70).